A 253-amino-acid polypeptide reads, in one-letter code: 5'/3'-nucleotidase SurE (253 aa).

A divalent metal cation is bound by residues aspartate 8, aspartate 9, serine 39, and asparagine 92.

The protein belongs to the SurE nucleotidase family. It depends on a divalent metal cation as a cofactor.

It localises to the cytoplasm. It carries out the reaction a ribonucleoside 5'-phosphate + H2O = a ribonucleoside + phosphate. The enzyme catalyses a ribonucleoside 3'-phosphate + H2O = a ribonucleoside + phosphate. The catalysed reaction is [phosphate](n) + H2O = [phosphate](n-1) + phosphate + H(+). In terms of biological role, nucleotidase with a broad substrate specificity as it can dephosphorylate various ribo- and deoxyribonucleoside 5'-monophosphates and ribonucleoside 3'-monophosphates with highest affinity to 3'-AMP. Also hydrolyzes polyphosphate (exopolyphosphatase activity) with the preference for short-chain-length substrates (P20-25). Might be involved in the regulation of dNTP and NTP pools, and in the turnover of 3'-mononucleotides produced by numerous intracellular RNases (T1, T2, and F) during the degradation of various RNAs. This is 5'/3'-nucleotidase SurE from Escherichia coli O7:K1 (strain IAI39 / ExPEC).